A 155-amino-acid polypeptide reads, in one-letter code: Small ribosomal subunit protein uS7cz/uS7cy (155 aa).

Belongs to the universal ribosomal protein uS7 family. Part of the 30S ribosomal subunit.

It is found in the plastid. The protein resides in the chloroplast. In terms of biological role, one of the primary rRNA binding proteins, it binds directly to 16S rRNA where it nucleates assembly of the head domain of the 30S subunit. In Lactuca sativa (Garden lettuce), this protein is Small ribosomal subunit protein uS7cz/uS7cy (rps7-A).